A 475-amino-acid polypeptide reads, in one-letter code: MKLRLRHHETRETLKLELADADTLHDLRRRINPTVPSSVHLSLNRKDELITPSPEDTLRSLGLISGDLIYFSLEAGESSNWKLRDSETVASQSESNQTSVHDSIGFAEVDVVPDQAKSNPNTSVEDPEGDISGMEGPEPMDVEQLDMELAAAGSKRLSEPFFLKNILLEKSGDTSELTTLALSVHAVMLESGFVLLNHGSDKFNFSKELLTVSLRYTLPELIKSKDTNTIESVSVKFQNLGPVVVVYGTVGGSSGRVHMNLDKRRFVPVIDLVMDTSTSDEEGSSSIYREVFMFWRMVKDRLVIPLLIGICDKAGLEPPPCLMRLPTELKLKILELLPGVSIGNMACVCTEMRYLASDNDLWKQKCLEEVNNFVVTEAGDSVNWKARFATFWRQKQLAAASDTFWRQNQLGRRNISTGRSGIRFPRIIGDPPFTWFNGDRMHGSIGIHPGQSARGLGRRTWGQLFTPRCNLGGLN.

Residues 114 to 133 (DQAKSNPNTSVEDPEGDISG) are disordered. Residues 319-365 (PPCLMRLPTELKLKILELLPGVSIGNMACVCTEMRYLASDNDLWKQK) form the F-box domain.

In terms of assembly, part of a SCF (ASK-cullin-F-box) protein ligase complex. Interacts with SKP1A/ASK1 and SPK1B/ASK2.

The protein resides in the nucleus. It participates in protein modification; protein ubiquitination. In terms of biological role, component of SCF(ASK-cullin-F-box) E3 ubiquitin ligase complexes, which may mediate the ubiquitination and subsequent proteasomal degradation of target proteins. In Arabidopsis thaliana (Mouse-ear cress), this protein is F-box protein SKIP22 (SKIP22).